Here is a 449-residue protein sequence, read N- to C-terminus: Histidinol dehydrogenase (449 aa).

NAD(+)-binding residues include Y135, Q199, and N229. Positions 252, 274, and 277 each coordinate substrate. Zn(2+)-binding residues include Q274 and H277. Active-site proton acceptor residues include E343 and H344. Substrate-binding residues include H344, D377, E431, and H436. D377 lines the Zn(2+) pocket. H436 is a binding site for Zn(2+).

The protein belongs to the histidinol dehydrogenase family. Requires Zn(2+) as cofactor.

It carries out the reaction L-histidinol + 2 NAD(+) + H2O = L-histidine + 2 NADH + 3 H(+). It participates in amino-acid biosynthesis; L-histidine biosynthesis; L-histidine from 5-phospho-alpha-D-ribose 1-diphosphate: step 9/9. In terms of biological role, catalyzes the sequential NAD-dependent oxidations of L-histidinol to L-histidinaldehyde and then to L-histidine. The protein is Histidinol dehydrogenase of Corynebacterium diphtheriae (strain ATCC 700971 / NCTC 13129 / Biotype gravis).